The primary structure comprises 561 residues: Putative transport protein YbjL (561 aa).

5 consecutive transmembrane segments (helical) span residues leucine 8–glycine 28, leucine 32–glutamine 52, phenylalanine 66–phenylalanine 86, methionine 94–phenylalanine 114, and asparagine 158–alanine 178. RCK C-terminal domains are found at residues arginine 200–asparagine 288 and valine 292–phenylalanine 373. 5 helical membrane passes run leucine 383–phenylalanine 403, phenylalanine 406–methionine 426, valine 451–isoleucine 471, methionine 475–alanine 495, and alanine 540–leucine 560.

Belongs to the AAE transporter (TC 2.A.81) family. YbjL subfamily.

The protein localises to the cell membrane. The sequence is that of Putative transport protein YbjL from Escherichia coli O139:H28 (strain E24377A / ETEC).